The chain runs to 492 residues: N-succinylglutamate 5-semialdehyde dehydrogenase (492 aa).

220 to 225 (GSANTG) provides a ligand contact to NAD(+). Catalysis depends on residues Glu243 and Cys277.

It belongs to the aldehyde dehydrogenase family. AstD subfamily.

The catalysed reaction is N-succinyl-L-glutamate 5-semialdehyde + NAD(+) + H2O = N-succinyl-L-glutamate + NADH + 2 H(+). The protein operates within amino-acid degradation; L-arginine degradation via AST pathway; L-glutamate and succinate from L-arginine: step 4/5. Functionally, catalyzes the NAD-dependent reduction of succinylglutamate semialdehyde into succinylglutamate. This chain is N-succinylglutamate 5-semialdehyde dehydrogenase, found in Escherichia coli O6:K15:H31 (strain 536 / UPEC).